The primary structure comprises 446 residues: N-succinylarginine dihydrolase (446 aa).

Residues 21–30, Asn112, and 139–140 each bind substrate; these read AGLSWGNVAS and HR. Residue Glu176 is part of the active site. Arg216 lines the substrate pocket. His252 is a catalytic residue. Positions 254 and 364 each coordinate substrate. Catalysis depends on Cys370, which acts as the Nucleophile.

This sequence belongs to the succinylarginine dihydrolase family. As to quaternary structure, homodimer.

It catalyses the reaction N(2)-succinyl-L-arginine + 2 H2O + 2 H(+) = N(2)-succinyl-L-ornithine + 2 NH4(+) + CO2. The protein operates within amino-acid degradation; L-arginine degradation via AST pathway; L-glutamate and succinate from L-arginine: step 2/5. In terms of biological role, catalyzes the hydrolysis of N(2)-succinylarginine into N(2)-succinylornithine, ammonia and CO(2). The chain is N-succinylarginine dihydrolase from Marinobacter nauticus (strain ATCC 700491 / DSM 11845 / VT8) (Marinobacter aquaeolei).